A 111-amino-acid polypeptide reads, in one-letter code: Large ribosomal subunit protein uL22 (111 aa).

It belongs to the universal ribosomal protein uL22 family. In terms of assembly, part of the 50S ribosomal subunit.

Its function is as follows. This protein binds specifically to 23S rRNA; its binding is stimulated by other ribosomal proteins, e.g. L4, L17, and L20. It is important during the early stages of 50S assembly. It makes multiple contacts with different domains of the 23S rRNA in the assembled 50S subunit and ribosome. Functionally, the globular domain of the protein is located near the polypeptide exit tunnel on the outside of the subunit, while an extended beta-hairpin is found that lines the wall of the exit tunnel in the center of the 70S ribosome. The polypeptide is Large ribosomal subunit protein uL22 (Clostridium tetani (strain Massachusetts / E88)).